The primary structure comprises 183 residues: Inner membrane-spanning protein YciB (183 aa).

5 helical membrane-spanning segments follow: residues 10-30, 50-70, 72-92, 118-138, and 148-168; these read LVIF…GALI, MHLI…VFHD, AFIK…LAVS, VTWY…YVAF, and FKVF…VIYL.

The protein belongs to the YciB family.

The protein localises to the cell inner membrane. In terms of biological role, plays a role in cell envelope biogenesis, maintenance of cell envelope integrity and membrane homeostasis. This chain is Inner membrane-spanning protein YciB, found in Shewanella sediminis (strain HAW-EB3).